The sequence spans 687 residues: E3 ubiquitin-protein ligase RNF19B (687 aa).

The interval 1–294 is required for ubiquitin ligase activity and for protection against staurosporin-induced cell death; that stretch reads MRLRNDCLVR…VCGCEFCWLC (294 aa). Residues 53 to 88 form a disordered region; it reads RTRAAPEPSVPSPPPSPPPPPPPPVSVPPPPSSPGG. Residues 60–85 show a composition bias toward pro residues; the sequence is PSVPSPPPSPPPPPPPPVSVPPPPSS. Residues 91-313 form a TRIAD supradomain region; it reads SLIECPLCLV…LSPSGCTFWG (223 aa). Cys-95, Cys-98, Cys-118, Cys-121, Cys-182, Cys-187, Cys-204, Cys-209, Cys-214, Cys-217, His-222, Cys-227, Cys-263, and Cys-266 together coordinate Zn(2+). An RING-type 1 zinc finger spans residues 95–144; sequence CPLCLVRQPPEEIPELLSCRHRSCLRCLRQYLRIEICESRVNLRCPECAE. An IBR-type zinc finger spans residues 161-227; sequence TRKYEEFLLR…KHVWHPNQTC (67 aa). The RING-type 2; atypical zinc-finger motif lies at 263–294; that stretch reads CPRCSAYIIKMNDGSCNHMTCSVCGCEFCWLC. The active site involves Cys-278. The Zn(2+) site is built by Cys-283, Cys-286, Cys-291, Cys-294, His-302, and Cys-309. The next 2 membrane-spanning stretches (helical) occupy residues 330–350 and 391–411; these read LIGA…AMVI and VVAA…VYGV. A disordered region spans residues 618-662; sequence SIRSDLESSDAQSDDVPDLASEEYDSPHLFPPSPSNALQESPPHR. The span at 629-641 shows a compositional bias: acidic residues; sequence QSDDVPDLASEEY.

It belongs to the RBR family. RNF19 subfamily. As to quaternary structure, interacts with UBE2L3, UBE2L6 and UCKL1.

The protein localises to the cytoplasmic granule membrane. It is found in the endoplasmic reticulum membrane. It catalyses the reaction [E2 ubiquitin-conjugating enzyme]-S-ubiquitinyl-L-cysteine + [acceptor protein]-L-lysine = [E2 ubiquitin-conjugating enzyme]-L-cysteine + [acceptor protein]-N(6)-ubiquitinyl-L-lysine.. It functions in the pathway protein modification; protein ubiquitination. Its function is as follows. E3 ubiquitin-protein ligase which accepts ubiquitin from E2 ubiquitin-conjugating enzymes UBE2L3 and UBE2L6 in the form of a thioester and then directly transfers the ubiquitin to targeted substrates, such as UCKL1. Involved in the cytolytic activity of natural killer cells and cytotoxic T-cells. Protects against staurosporin-induced cell death. The polypeptide is E3 ubiquitin-protein ligase RNF19B (rnf19b) (Xenopus laevis (African clawed frog)).